The following is a 1096-amino-acid chain: cAMP/cGMP-dependent 3',5'-cAMP/cGMP phosphodiesterase B (1096 aa).

The interval 216-248 is disordered; the sequence is SSSKMIINDSPRTQQRNGTTEQQKKQQQQQYLQ. Positions 225–236 are enriched in polar residues; sequence SPRTQQRNGTTE. 3 residues coordinate a divalent metal cation: histidine 573, histidine 575, and aspartate 577. A nucleoside 3',5'-cyclic phosphate is bound by residues 783–930 and 946–1070; these read VFSK…DLSH and ITQH…EDNI.

Belongs to the metallo-beta-lactamase superfamily. cNMP phosphodiesterase family. Mn(2+) is required as a cofactor. Mg(2+) serves as cofactor. Requires Zn(2+) as cofactor.

The protein resides in the cytoplasm. It localises to the cytosol. The catalysed reaction is 3',5'-cyclic AMP + H2O = AMP + H(+). The enzyme catalyses 3',5'-cyclic GMP + H2O = GMP + H(+). Its function is as follows. Dual specificity cAMP and cGMP phosphodiesterase with marked preference for cyclic AMP, which is activated by cAMP and cGMP. Likely functions as a cAMP-stimulated cAMP-phosphodiesterase which may play a role in regulating the cAMP relay response. This is cAMP/cGMP-dependent 3',5'-cAMP/cGMP phosphodiesterase B (pdeE) from Dictyostelium discoideum (Social amoeba).